We begin with the raw amino-acid sequence, 578 residues long: Vesicular acetylcholine transporter (578 aa).

At 1–32 (MASFQIPVINLEVREVKDIVWEKIQEPVNQRR) the chain is on the cytoplasmic side. The helical transmembrane segment at 33-53 (LILVIVSIALLLDNMLYMVIV) threads the bilayer. Topologically, residues 54 to 98 (PIIPDYLREIGSFDDGPTPPPLRDNITGKIIPVHHDHHGQDSATG) are lumenal, vesicle. An N-linked (GlcNAc...) asparagine glycan is attached at N78. Residues 99–119 (ILFASKAIVQLMVNPFSGGLI) form a helical membrane-spanning segment. The Cytoplasmic portion of the chain corresponds to 120–125 (DKIGYD). Residues 126–146 (LPMMIGLTIMFFSTAVFACGS) form a helical membrane-spanning segment. The Lumenal, vesicle segment spans residues 147 to 154 (SYSVLFFA). The chain crosses the membrane as a helical span at residues 155 to 175 (RSLQGAGSAFADTAGLAMIAD). The Cytoplasmic segment spans residues 176–187 (RFTEENERSQAL). The chain crosses the membrane as a helical span at residues 188–208 (GIALAFISFGCLVAPPFGGAL). Topologically, residues 209 to 215 (YQFAGKE) are lumenal, vesicle. A helical membrane pass occupies residues 216-236 (VPFLILALVCLLDGLMLLLVM). Topologically, residues 237 to 263 (KPVKEAMKQSKDVQDQVIPIWRLLMDP) are cytoplasmic. A helical transmembrane segment spans residues 264 to 284 (YIAVCAGALTMSNVALAFLEP). Residues 285–299 (TISLWMEDNMTTDNW) are Lumenal, vesicle-facing. N293 carries an N-linked (GlcNAc...) asparagine glycan. Residues 300–320 (KIGMVWLPAFFPHVLGVVITV) form a helical membrane-spanning segment. Residues 321 to 330 (KMARKYPQHQ) lie on the Cytoplasmic side of the membrane. The helical transmembrane segment at 331-351 (WLMAAGGLALEGFSCFIIPFC) threads the bilayer. The Lumenal, vesicle segment spans residues 352-355 (SGYK). Residues 356–376 (MLMLPICVICFGIALIDTALL) traverse the membrane as a helical segment. Residues 377–387 (PTLGYLVDVRY) are Cytoplasmic-facing. Residues 388-408 (VSVYGSIYAIADISYSIAYAV) traverse the membrane as a helical segment. Residues 409–413 (GPIIA) are Lumenal, vesicle-facing. Residues 414 to 434 (GGVVEAIGFTALNFLIAFSNL) form a helical membrane-spanning segment. Topologically, residues 435 to 578 (AYVPVLRKLR…APANPFRQGF (144 aa)) are cytoplasmic. 2 stretches are compositionally biased toward low complexity: residues 507–534 (EYQQ…EQGG) and 549–563 (QQQQ…QQVQ). The interval 507–578 (EYQQQQQGYQ…APANPFRQGF (72 aa)) is disordered.

The protein belongs to the major facilitator superfamily. Vesicular transporter family.

The protein localises to the membrane. In terms of biological role, involved in acetylcholine transport into synaptic vesicles. The chain is Vesicular acetylcholine transporter (VAChT) from Drosophila melanogaster (Fruit fly).